Here is a 930-residue protein sequence, read N- to C-terminus: Isoleucine--tRNA ligase (930 aa).

A 'HIGH' region motif is present at residues 57-67; it reads PYANGNIHVGH. Glu-554 is an L-isoleucyl-5'-AMP binding site. The 'KMSKS' region motif lies at 595 to 599; the sequence is KMSKS. Lys-598 provides a ligand contact to ATP. Zn(2+)-binding residues include Cys-888, Cys-891, Cys-908, and Cys-911.

It belongs to the class-I aminoacyl-tRNA synthetase family. IleS type 1 subfamily. Monomer. Requires Zn(2+) as cofactor.

It is found in the cytoplasm. The catalysed reaction is tRNA(Ile) + L-isoleucine + ATP = L-isoleucyl-tRNA(Ile) + AMP + diphosphate. Catalyzes the attachment of isoleucine to tRNA(Ile). As IleRS can inadvertently accommodate and process structurally similar amino acids such as valine, to avoid such errors it has two additional distinct tRNA(Ile)-dependent editing activities. One activity is designated as 'pretransfer' editing and involves the hydrolysis of activated Val-AMP. The other activity is designated 'posttransfer' editing and involves deacylation of mischarged Val-tRNA(Ile). This chain is Isoleucine--tRNA ligase, found in Streptococcus pneumoniae (strain Hungary19A-6).